A 693-amino-acid chain; its full sequence is Elongation factor G (693 aa).

The region spanning 7-282 (EKIRNIGITA…SVIDYLPAPT (276 aa)) is the tr-type G domain. Residues 16 to 23 (AHIDAGKT), 80 to 84 (DTPGH), and 134 to 137 (NKLD) contribute to the GTP site.

This sequence belongs to the TRAFAC class translation factor GTPase superfamily. Classic translation factor GTPase family. EF-G/EF-2 subfamily.

The protein resides in the cytoplasm. In terms of biological role, catalyzes the GTP-dependent ribosomal translocation step during translation elongation. During this step, the ribosome changes from the pre-translocational (PRE) to the post-translocational (POST) state as the newly formed A-site-bound peptidyl-tRNA and P-site-bound deacylated tRNA move to the P and E sites, respectively. Catalyzes the coordinated movement of the two tRNA molecules, the mRNA and conformational changes in the ribosome. This chain is Elongation factor G, found in Granulibacter bethesdensis (strain ATCC BAA-1260 / CGDNIH1).